Here is a 76-residue protein sequence, read N- to C-terminus: Exodeoxyribonuclease 7 small subunit (76 aa).

The protein belongs to the XseB family. In terms of assembly, heterooligomer composed of large and small subunits.

It is found in the cytoplasm. It carries out the reaction Exonucleolytic cleavage in either 5'- to 3'- or 3'- to 5'-direction to yield nucleoside 5'-phosphates.. Functionally, bidirectionally degrades single-stranded DNA into large acid-insoluble oligonucleotides, which are then degraded further into small acid-soluble oligonucleotides. The chain is Exodeoxyribonuclease 7 small subunit from Geobacter metallireducens (strain ATCC 53774 / DSM 7210 / GS-15).